The sequence spans 556 residues: MDEFDGFTRPTSSNSSANRNSNNSMNRVENNNSNSDSANTVDSRGDAHTRMRQGFEKSFPSSPNKKRPRTNEGDRFIPSRDASTELWTGFTKVEGPLTPVKKKQSVADRNFTTLLRSELFGSNDETFNNSPIATPNTTIGVSTPRTDSGIDDIELTQRTPPSSSHTSSSILQNTPVTPSRKIFHYLSPRDRNKSSYGKKAQYQDNPNRTIYSLSPVRSITKDLISASRLEGRELPSIPYRVLDAPGLAGDFYLNLLDWGQCNMLAVALASRVYLWSGISSEVTVMHNFYPTDTVTSLRWVQRGTHLAVGTHNGSVEIWDAATCKKTRTMSGHTERVGALSWNDHVLSSGGRDNHILHRDVRAPEHYFRVLTAHRQEVCGLEWNSNENLLASGGNDNALMVWDKFEEKPLYSFHNHIAAVKAITWSPHQRGILASGGGTADRTIKLWNTQRGSMLHNIDTGSQVCNLLWSKQTNEFISTHGFMENEVALWNYPSVSRVGTLKGHTDRVLYLAMSPNGENIVTGAADETLRFWKLFDSKSKHSASTMSSPFDPTMKIR.

The disordered stretch occupies residues 1-80 (MDEFDGFTRP…NEGDRFIPSR (80 aa)). Residues 12 to 37 (SSNSSANRNSNNSMNRVENNNSNSDS) are compositionally biased toward low complexity. The segment covering 43 to 55 (SRGDAHTRMRQGF) has biased composition (basic and acidic residues). S62 is modified (phosphoserine). A compositionally biased stretch (basic and acidic residues) spans 69-78 (RTNEGDRFIP). The residue at position 98 (T98) is a Phosphothreonine. Positions 126-146 (TFNNSPIATPNTTIGVSTPRT) are enriched in polar residues. The disordered stretch occupies residues 126-173 (TFNNSPIATPNTTIGVSTPRTDSGIDDIELTQRTPPSSSHTSSSILQN). A compositionally biased stretch (low complexity) spans 159 to 169 (TPPSSSHTSSS). A Phosphothreonine modification is found at T177. A phosphoserine mark is found at S187 and S214. WD repeat units lie at residues 246–285 (GLAGDFYLNLLDWGQCNMLAVALASRVYLWSGISSEVTVM), 289–328 (YPTDTVTSLRWVQRGTHLAVGTHNGSVEIWDAATCKKTRT), 331–368 (GHTERVGALSWNDHVLSSGGRDNHILHRDVRAPEHYFR), 372–411 (AHRQEVCGLEWNSNENLLASGGNDNALMVWDKFEEKPLYS), 414–456 (NHIA…MLHN), 458–499 (DTGS…RVGT), and 502–541 (GHTDRVLYLAMSPNGENIVTGAADETLRFWKLFDSKSKHS).

This sequence belongs to the WD repeat CDC20/Fizzy family. In terms of processing, phosphorylated by cdc2-cdc13-CDK complex. This targets srw1 for proteolysis which in turn promotes cdc13 turnover. Dephosphorylated during G1 arrest.

The protein localises to the nucleus. Functionally, has a role in cell differentiation and cell cycling by negatively regulating cig2 and cdc12-associated cdc2. Down-regulates the level of cdc13, particularly in a nitrogen deprived environment. Regulator of cell cycle G1 phase progression. Prevents onset of mitosis during the pre-Start G1 period. Required for degradation of cdc13 mitotic cyclin B during G1 arrest but not during mitotic exit. The polypeptide is WD repeat-containing protein srw1 (srw1) (Schizosaccharomyces pombe (strain 972 / ATCC 24843) (Fission yeast)).